Consider the following 112-residue polypeptide: Large ribosomal subunit protein eL34A (112 aa).

The protein belongs to the eukaryotic ribosomal protein eL34 family. In terms of assembly, component of the large ribosomal subunit (LSU). Mature yeast ribosomes consist of a small (40S) and a large (60S) subunit. The 40S small subunit contains 1 molecule of ribosomal RNA (18S rRNA) and at least 33 different proteins. The large 60S subunit contains 3 rRNA molecules (25S, 5.8S and 5S rRNA) and at least 46 different proteins.

Its subcellular location is the cytoplasm. Its function is as follows. Component of the ribosome, a large ribonucleoprotein complex responsible for the synthesis of proteins in the cell. The small ribosomal subunit (SSU) binds messenger RNAs (mRNAs) and translates the encoded message by selecting cognate aminoacyl-transfer RNA (tRNA) molecules. The large subunit (LSU) contains the ribosomal catalytic site termed the peptidyl transferase center (PTC), which catalyzes the formation of peptide bonds, thereby polymerizing the amino acids delivered by tRNAs into a polypeptide chain. The nascent polypeptides leave the ribosome through a tunnel in the LSU and interact with protein factors that function in enzymatic processing, targeting, and the membrane insertion of nascent chains at the exit of the ribosomal tunnel. This chain is Large ribosomal subunit protein eL34A (rpl3401), found in Schizosaccharomyces pombe (strain 972 / ATCC 24843) (Fission yeast).